Here is a 368-residue protein sequence, read N- to C-terminus: tRNA-specific 2-thiouridylase MnmA (368 aa).

Residues 24 to 31 (AMSGGVDS) and Leu50 each bind ATP. Residue Cys117 is the Nucleophile of the active site. Cys117 and Cys213 are disulfide-bonded. Gly141 serves as a coordination point for ATP. The interval 163–165 (KDQ) is interaction with tRNA. Residue Cys213 is the Cysteine persulfide intermediate of the active site.

Belongs to the MnmA/TRMU family.

It localises to the cytoplasm. The catalysed reaction is S-sulfanyl-L-cysteinyl-[protein] + uridine(34) in tRNA + AH2 + ATP = 2-thiouridine(34) in tRNA + L-cysteinyl-[protein] + A + AMP + diphosphate + H(+). Its function is as follows. Catalyzes the 2-thiolation of uridine at the wobble position (U34) of tRNA, leading to the formation of s(2)U34. This is tRNA-specific 2-thiouridylase MnmA from Wolbachia pipientis subsp. Culex pipiens (strain wPip).